We begin with the raw amino-acid sequence, 460 residues long: ATP synthase subunit beta (460 aa).

150-157 (GGAGVGKT) lines the ATP pocket.

This sequence belongs to the ATPase alpha/beta chains family. As to quaternary structure, F-type ATPases have 2 components, CF(1) - the catalytic core - and CF(0) - the membrane proton channel. CF(1) has five subunits: alpha(3), beta(3), gamma(1), delta(1), epsilon(1). CF(0) has three main subunits: a(1), b(2) and c(9-12). The alpha and beta chains form an alternating ring which encloses part of the gamma chain. CF(1) is attached to CF(0) by a central stalk formed by the gamma and epsilon chains, while a peripheral stalk is formed by the delta and b chains.

It is found in the cell inner membrane. It catalyses the reaction ATP + H2O + 4 H(+)(in) = ADP + phosphate + 5 H(+)(out). Its function is as follows. Produces ATP from ADP in the presence of a proton gradient across the membrane. The catalytic sites are hosted primarily by the beta subunits. In Citrobacter koseri (strain ATCC BAA-895 / CDC 4225-83 / SGSC4696), this protein is ATP synthase subunit beta.